A 466-amino-acid chain; its full sequence is Glutamate--tRNA ligase 1 (466 aa).

Positions Pro-10–Asn-20 match the 'HIGH' region motif. Zn(2+) contacts are provided by Cys-103, Cys-105, Cys-130, and His-132. The short motif at Pro-247–Arg-251 is the 'KMSKS' region element. Residue Lys-250 participates in ATP binding.

Belongs to the class-I aminoacyl-tRNA synthetase family. Glutamate--tRNA ligase type 1 subfamily. In terms of assembly, monomer. The cofactor is Zn(2+).

It localises to the cytoplasm. The catalysed reaction is tRNA(Glu) + L-glutamate + ATP = L-glutamyl-tRNA(Glu) + AMP + diphosphate. Functionally, catalyzes the attachment of glutamate to tRNA(Glu) in a two-step reaction: glutamate is first activated by ATP to form Glu-AMP and then transferred to the acceptor end of tRNA(Glu). The sequence is that of Glutamate--tRNA ligase 1 from Methylococcus capsulatus (strain ATCC 33009 / NCIMB 11132 / Bath).